Consider the following 367-residue polypeptide: Heme A synthase (367 aa).

8 helical membrane passes run 26-46 (IRGW…VGGA), 111-131 (LLAR…WVTG), 139-159 (LPLL…WWMV), 174-194 (LATH…IYRG), 212-232 (AAVI…VAGL), 272-292 (FVHR…MIAA), 305-325 (SVLL…TLLL), and 327-347 (VPIG…GFAI). Residue His274 participates in heme binding. Position 335 (His335) interacts with heme.

The protein belongs to the COX15/CtaA family. Type 2 subfamily. As to quaternary structure, interacts with CtaB. It depends on heme b as a cofactor.

The protein localises to the cell membrane. The enzyme catalyses Fe(II)-heme o + 2 A + H2O = Fe(II)-heme a + 2 AH2. It functions in the pathway porphyrin-containing compound metabolism; heme A biosynthesis; heme A from heme O: step 1/1. Its function is as follows. Catalyzes the conversion of heme O to heme A by two successive hydroxylations of the methyl group at C8. The first hydroxylation forms heme I, the second hydroxylation results in an unstable dihydroxymethyl group, which spontaneously dehydrates, resulting in the formyl group of heme A. This Sinorhizobium medicae (strain WSM419) (Ensifer medicae) protein is Heme A synthase.